Consider the following 266-residue polypeptide: Glucosamine-6-phosphate deaminase (266 aa).

Residue D72 is the Proton acceptor; for enolization step of the active site. Residue D141 is the For ring-opening step of the active site. H143 (proton acceptor; for ring-opening step) is an active-site residue. Catalysis depends on E148, which acts as the For ring-opening step.

It belongs to the glucosamine/galactosamine-6-phosphate isomerase family. NagB subfamily. In terms of assembly, homohexamer; trimer of disulfide-linked dimers.

It catalyses the reaction alpha-D-glucosamine 6-phosphate + H2O = beta-D-fructose 6-phosphate + NH4(+). Its pathway is amino-sugar metabolism; N-acetylneuraminate degradation; D-fructose 6-phosphate from N-acetylneuraminate: step 5/5. With respect to regulation, allosterically activated by N-acetylglucosamine 6-phosphate (GlcNAc6P). In terms of biological role, catalyzes the reversible isomerization-deamination of glucosamine 6-phosphate (GlcN6P) to form fructose 6-phosphate (Fru6P) and ammonium ion. The sequence is that of Glucosamine-6-phosphate deaminase from Shigella boydii serotype 18 (strain CDC 3083-94 / BS512).